Here is a 46-residue protein sequence, read N- to C-terminus: Toxin Up-1 (46 aa).

Its subcellular location is the secreted. It localises to the nematocyst. The protein resides in the target cell membrane. This toxin is a potent hemolysin devoid of enzymatic activity. Its hemolytic activity is inhibited by sphingomyelin but not by cholesterol. In erythrocyte membranes, it causes numerous cell membrane ruptures. It also exerces cytotoxicity to different cell lines. It exerces a positive inotropic effect. Also causes hemorrhage and necrosis by dilation of the blood vessels in the skin, and vascular leakage of fluids and rupture of alveolar walls of the lungs. Is a potent ichtyotoxin. May act as a pore-forming toxin. In Urticina piscivora (Fish-eating sea anemone), this protein is Toxin Up-1.